Consider the following 75-residue polypeptide: Small ribosomal subunit protein bS18c (75 aa).

Belongs to the bacterial ribosomal protein bS18 family. As to quaternary structure, part of the 30S ribosomal subunit.

The protein localises to the plastid. This Aneura mirabilis (Parasitic liverwort) protein is Small ribosomal subunit protein bS18c.